We begin with the raw amino-acid sequence, 103 residues long: Cyclotide vibi-K (103 aa).

The first 9 residues, 1–9 (AAFALPAFA), serve as a signal peptide directing secretion. Positions 10-69 (SFEKDVITPSVLEAVLNRKAPLSNIMMENDAILNVIANVKTVISNPVLEEALLKTNHGVN) are excised as a propeptide. Residues 70–99 (GIPCGESCVWIPCLTSAVGCPCKSKVCYRN) constitute a cross-link (cyclopeptide (Gly-Asn)). 3 cysteine pairs are disulfide-bonded: Cys73–Cys89, Cys77–Cys91, and Cys82–Cys96. Residues 100–103 (SLDN) constitute a propeptide that is removed on maturation.

Post-translationally, this is a cyclic peptide.

In terms of biological role, probably participates in a plant defense mechanism. The chain is Cyclotide vibi-K from Viola biflora (Yellow wood violet).